We begin with the raw amino-acid sequence, 1089 residues long: Translocase of chloroplast 120, chloroplastic (1089 aa).

An N-acetylglycine modification is found at G2. 3 disordered regions span residues A158–S179, T255–R339, and Q353–E381. Residues E165–G176 are compositionally biased toward polar residues. A phosphoserine mark is found at S179, S263, and S283. The span at E300–E312 shows a compositional bias: basic and acidic residues. Low complexity predominate over residues A327–R339. Over residues Q353–A374 the composition is skewed to polar residues. The AIG1-type G domain maps to D454–Q683. Residues G463–S470 form a G1 region. GTP is bound by residues G466–A471 and D485–G490. S470 serves as a coordination point for Mg(2+). Positions D485–Q488 are homodimerization. The G2 stretch occupies residues V489–K493. A G3 region spans residues D510–G513. The homodimerization stretch occupies residues R548 to S553. A G4 region spans residues T582–A585. Residues H583 and E631–N632 contribute to the GTP site. Residues E631–H633 are G5. Residues P710–E748 are disordered. Residues Q713–E737 are compositionally biased toward acidic residues. Residues R767–K788 are a coiled coil. Residues L1064 to Y1080 traverse the membrane as a helical segment.

It belongs to the TRAFAC class TrmE-Era-EngA-EngB-Septin-like GTPase superfamily. AIG1/Toc34/Toc159-like paraseptin GTPase family. TOC159 subfamily. Homodimer. Part of the TOC core complex that includes 1 protein for the specific recognition of transit peptides surrounded by a ring composed of four proteins forming translocation channels, and four to five GTP-binding proteins providing energy. This core complex can interact with components of the TIC complex to form a larger import complex. Chloroplastic protein precursor such as prSS (precursor of the RuBisCO small subunit) interacts with these complexes. The TOC complex contains a specific subset of polar lipids such as digalactosyldiacylglyceride (DGDG), phosphatidylcholine (PC) and phosphatidylglycerol (PG). Requires Mg(2+) as cofactor. In terms of processing, phosphorylated by KOC1. In terms of tissue distribution, expressed in seedlings, flowers, and roots.

Its subcellular location is the plastid. It localises to the chloroplast outer membrane. It is found in the cytoplasm. Functionally, GTPase involved in protein precursor import into chloroplasts. Seems to recognize chloroplast-destined precursor proteins and regulate their presentation to the translocation channel through GTP hydrolysis. Probably specialized in the import of nuclear encoded non-photosynthetic preproteins from the cytoplasm to the chloroplast. This Arabidopsis thaliana (Mouse-ear cress) protein is Translocase of chloroplast 120, chloroplastic.